Here is a 239-residue protein sequence, read N- to C-terminus: Protein TIPIN homolog (239 aa).

Acidic residues-rich tracts occupy residues 1-14 (MDEMDDFFGNDELD) and 156-166 (DGADDDEDDLF). Disordered stretches follow at residues 1–38 (MDEMDDFFGNDELDREPSPFGEEAIEDNTGEEGSRRII) and 135–239 (ESTD…NNDW). 2 stretches are compositionally biased toward basic and acidic residues: residues 169-193 (LPEKETPTKPINHTEKVVDSPEKKN) and 206-223 (YRMMEEERLREEQEAREA). Acidic residues predominate over residues 224–239 (EAEDELMEDFDLNNDW).

This sequence belongs to the CSM3 family.

Its subcellular location is the cytoplasm. The protein resides in the nucleus. In terms of biological role, required for normal progression of S-phase. Important for cell survival after DNA damage or replication stress. This Caenorhabditis briggsae protein is Protein TIPIN homolog.